Consider the following 465-residue polypeptide: Protein CitXG (465 aa).

Positions 1-182 (MQHFFTTFST…QSLAQNHDFA (182 aa)) are apo-citrate lyase phosphoribosyl-dephospho-CoA transferase. A 2-(5''-triphosphoribosyl)-3'-dephosphocoenzyme-A synthase region spans residues 183 to 465 (EHIGEQVYLA…TIFFLSFRGN (283 aa)).

It in the N-terminal section; belongs to the CitX family. This sequence in the C-terminal section; belongs to the CitG/MdcB family.

The catalysed reaction is apo-[citrate lyase ACP] + 2'-(5''-triphospho-alpha-D-ribosyl)-3'-dephospho-CoA = holo-[citrate lyase ACP] + diphosphate. It catalyses the reaction 3'-dephospho-CoA + ATP = 2'-(5''-triphospho-alpha-D-ribosyl)-3'-dephospho-CoA + adenine. Its function is as follows. Bifunctional enzyme that catalyzes formation of 2-(5''-triphosphoribosyl)-3'-dephosphocoenzyme-A, and then the transfer of this prosthetic group precursor to the apo-acyl carrier protein (gamma chain) of the citrate lyase to yield the holo-acyl carrier protein. In Haemophilus influenzae (strain ATCC 51907 / DSM 11121 / KW20 / Rd), this protein is Protein CitXG (citXG).